The primary structure comprises 177 residues: Adenine phosphoribosyltransferase (177 aa).

Belongs to the purine/pyrimidine phosphoribosyltransferase family. As to quaternary structure, homodimer.

It localises to the cytoplasm. The catalysed reaction is AMP + diphosphate = 5-phospho-alpha-D-ribose 1-diphosphate + adenine. Its pathway is purine metabolism; AMP biosynthesis via salvage pathway; AMP from adenine: step 1/1. Functionally, catalyzes a salvage reaction resulting in the formation of AMP, that is energically less costly than de novo synthesis. The sequence is that of Adenine phosphoribosyltransferase from Mycobacteroides abscessus (strain ATCC 19977 / DSM 44196 / CCUG 20993 / CIP 104536 / JCM 13569 / NCTC 13031 / TMC 1543 / L948) (Mycobacterium abscessus).